An 806-amino-acid polypeptide reads, in one-letter code: Sperm head and tail associated protein (806 aa).

4 disordered regions span residues 1–36, 257–329, 428–496, and 707–806; these read MNSSPPFLLKISAPSTSPQADCPNNYSFPPESPSSC, TPAS…MSGS, LNNQ…CPQP, and SQIN…SKKK. The span at 13-27 shows a compositional bias: polar residues; the sequence is APSTSPQADCPNNYS. Residues 277 to 290 show a composition bias toward low complexity; it reads PPLSSASSPPSGNP. Over residues 320–329 the composition is skewed to polar residues; the sequence is LSSQAGMSGS. The interval 521–806 is interaction with CRISP2; that stretch reads KEPPPETAVL…QIKSPHSKKK (286 aa). Composition is skewed to low complexity over residues 710 to 723 and 733 to 754; these read NHQNKSQSPNKNSS and RRGAFQSRSRSRSSSPLQSSTQ. Positions 773–788 are enriched in polar residues; it reads QSQSPADGKIESQSKS.

Interacts with CRISP2. In terms of tissue distribution, isoforms 3 and 4 are expressed in testis (at protein level).

It localises to the cytoplasm. In terms of biological role, plays a role during spermatogenesis. This Mus musculus (Mouse) protein is Sperm head and tail associated protein (Nsun4).